A 1147-amino-acid chain; its full sequence is Cellulose synthase-like protein D3 (1147 aa).

Disordered stretches follow at residues 1–33 and 259–281; these read MSTGPGKKAIRNAGGVGGGAGPSAGGPRGPAGQ and KLGGDGGGGGGGGPLPEQKPFKP. 2 stretches are compositionally biased toward gly residues: residues 14-29 and 262-272; these read GGVGGGAGPSAGGPRG and GDGGGGGGGGP. Transmembrane regions (helical) follow at residues 292–312 and 322–342; these read VISPYRIFIVIRMFVLLFYLT and ALWLWGMSIVCELWFAFSWLL. Active-site residues include Asp-422 and Asp-847. The next 6 helical transmembrane spans lie at 929 to 949, 954 to 974, 1001 to 1021, 1045 to 1065, 1075 to 1095, and 1108 to 1128; these read IFLLVYCFIPALSLFSGFFIV, IAFLCYLLTMTITLVALGILE, LYAVVQGLLKVMAGIEISFTL, LLIPPITIGMVNIIAIAFAFA, WGKFIGGGFFSFWVLAHLNPF, and TIVFVWSGLLSITVSLLWVAI.

Belongs to the glycosyltransferase 2 family. Plant cellulose synthase-like D subfamily.

It localises to the golgi apparatus membrane. Functionally, thought to be a Golgi-localized beta-glycan synthase that polymerize the backbones of noncellulosic polysaccharides (hemicelluloses) of plant cell wall. This Oryza sativa subsp. japonica (Rice) protein is Cellulose synthase-like protein D3 (CSLD3).